The following is a 66-amino-acid chain: Alpha-like toxin BmK-M7 (66 aa).

The LCN-type CS-alpha/beta domain occupies 2 to 64; that stretch reads RDGYIALPHN…VPIRVPGRCH (63 aa). Cystine bridges form between Cys12–Cys63, Cys16–Cys36, Cys22–Cys46, and Cys26–Cys48.

This sequence belongs to the long (4 C-C) scorpion toxin superfamily. Sodium channel inhibitor family. Alpha subfamily. As to expression, expressed by the venom gland.

The protein resides in the secreted. In terms of biological role, alpha toxins bind voltage-independently at site-3 of sodium channels (Nav) and inhibit the inactivation of the activated channels, thereby blocking neuronal transmission. This toxin is active on both mammals and insects. It can be considered as a cardiotoxin, as it can bind to human cardiac sodium channel and modify its normal properties. The polypeptide is Alpha-like toxin BmK-M7 (Olivierus martensii (Manchurian scorpion)).